A 628-amino-acid chain; its full sequence is LRR receptor kinase SERK2 (628 aa).

The first 31 residues, 1-31 (MAEARLLRRRRLCLAVPFVWVVAVAVSRVGA), serve as a signal peptide directing secretion. LRR repeat units follow at residues 97–121 (LKNL…LGNL), 123–144 (NLVS…TLGQ), 145–169 (LYKL…LTNI), and 170–194 (TTLQ…SFSL). Asparagine 109, asparagine 120, asparagine 133, asparagine 155, asparagine 168, and asparagine 181 each carry an N-linked (GlcNAc...) asparagine glycan. A helical transmembrane segment spans residues 243–263 (AIAGGVAAAAALLFAVPAIGF). Position 303 is a phosphothreonine (threonine 303). The 288-residue stretch at 306-593 (FSNKNILGRG…GLAERWEEWQ (288 aa)) folds into the Protein kinase domain. 312–320 (LGRGGFGKV) is an ATP binding site. The residue at position 329 (serine 329) is a Phosphoserine. Lysine 334 is a binding site for ATP. Threonine 350 is modified (phosphothreonine). Serine 356 and serine 387 each carry phosphoserine. Aspartate 433 acts as the Proton acceptor in catalysis. Threonine 463, threonine 466, and threonine 472 each carry phosphothreonine. Residue serine 615 is modified to Phosphoserine. Threonine 616 carries the post-translational modification Phosphothreonine. At serine 625 the chain carries Phosphoserine.

Belongs to the protein kinase superfamily. Ser/Thr protein kinase family. In terms of assembly, interacts with BRI1. Interacts with XA21, XA26/XA3 and FLS2. In terms of processing, autophosphorylated on serine and threonine residues. As to expression, expressed in flag leaves. Expressed in roots, shoot apex, leaf blades, leaf sheaths, panicles and flowers. Expressed leaves, stems, sheaths and flowers.

It localises to the cell membrane. The catalysed reaction is L-seryl-[protein] + ATP = O-phospho-L-seryl-[protein] + ADP + H(+). The enzyme catalyses L-threonyl-[protein] + ATP = O-phospho-L-threonyl-[protein] + ADP + H(+). Functionally, LRR receptor kinase involved in positive regulation of somatic embryogenesis and defense response against the rice blast fungus pathogen Magnaporthe oryzae. Involved in the positive regulation of receptor kinase-mediated immunity. Required for immunity mediated by the LRR receptor kinases XA21 and XA26/XA3 which recognize effectors from the bacterial pathogen Xanthomonas oryzae pv. oryzae (Xoo). Required for the immune response mediated by the LRR receptor kinase FLS2 which recognizes specifically the bacterial flagellin (flg22) effector. Kinase activity and direct interaction with the immune receptors is critical for their function. Involved in the regulation of plant growth through the brassinosteroid (BR) signaling pathway. The polypeptide is LRR receptor kinase SERK2 (Oryza sativa subsp. japonica (Rice)).